A 243-amino-acid polypeptide reads, in one-letter code: Small ribosomal subunit protein eS4 (243 aa).

The S4 RNA-binding domain occupies 43 to 105; it reads IPLLYIVRDY…TGEHYRVLPN (63 aa).

Belongs to the eukaryotic ribosomal protein eS4 family.

The polypeptide is Small ribosomal subunit protein eS4 (rps4e) (Pyrococcus abyssi (strain GE5 / Orsay)).